A 55-amino-acid polypeptide reads, in one-letter code: Large ribosomal subunit protein bL33 (55 aa).

It belongs to the bacterial ribosomal protein bL33 family.

In Rhizobium johnstonii (strain DSM 114642 / LMG 32736 / 3841) (Rhizobium leguminosarum bv. viciae), this protein is Large ribosomal subunit protein bL33.